The sequence spans 206 residues: Small ribosomal subunit protein uS4 (206 aa).

Residues 96 to 158 (GRLDNVVYRM…AKQQSRIKAA (63 aa)) form the S4 RNA-binding domain.

Belongs to the universal ribosomal protein uS4 family. In terms of assembly, part of the 30S ribosomal subunit. Contacts protein S5. The interaction surface between S4 and S5 is involved in control of translational fidelity.

Functionally, one of the primary rRNA binding proteins, it binds directly to 16S rRNA where it nucleates assembly of the body of the 30S subunit. Its function is as follows. With S5 and S12 plays an important role in translational accuracy. This is Small ribosomal subunit protein uS4 from Aliivibrio fischeri (strain ATCC 700601 / ES114) (Vibrio fischeri).